A 554-amino-acid polypeptide reads, in one-letter code: Glucose-6-phosphate isomerase (554 aa).

The Proton donor role is filled by glutamate 359. Catalysis depends on residues histidine 390 and lysine 518.

Belongs to the GPI family.

It is found in the cytoplasm. The catalysed reaction is alpha-D-glucose 6-phosphate = beta-D-fructose 6-phosphate. It functions in the pathway carbohydrate biosynthesis; gluconeogenesis. Its pathway is carbohydrate degradation; glycolysis; D-glyceraldehyde 3-phosphate and glycerone phosphate from D-glucose: step 2/4. Functionally, catalyzes the reversible isomerization of glucose-6-phosphate to fructose-6-phosphate. This Stutzerimonas stutzeri (strain A1501) (Pseudomonas stutzeri) protein is Glucose-6-phosphate isomerase.